The sequence spans 152 residues: Endoribonuclease YbeY (152 aa).

The Zn(2+) site is built by His114, His118, and His124.

Belongs to the endoribonuclease YbeY family. Zn(2+) serves as cofactor.

It is found in the cytoplasm. Functionally, single strand-specific metallo-endoribonuclease involved in late-stage 70S ribosome quality control and in maturation of the 3' terminus of the 16S rRNA. The protein is Endoribonuclease YbeY of Wigglesworthia glossinidia brevipalpis.